The sequence spans 20 residues: Short cationic peptide-4a (20 aa).

Glu20 is subject to Glutamic acid 1-amide.

As to expression, expressed by the venom gland.

It is found in the secreted. This is Short cationic peptide-4a from Cupiennius salei (American wandering spider).